The sequence spans 98 residues: N(2)-fixation sustaining protein CowN (98 aa).

It belongs to the CowN family.

Functionally, is required to sustain N(2)-dependent growth in the presence of low levels of carbon monoxide (CO). Probably acts by protecting the N(2) fixation ability of the nitrogenase complex, which is inactivated in the presence of CO. The sequence is that of N(2)-fixation sustaining protein CowN from Trichlorobacter lovleyi (strain ATCC BAA-1151 / DSM 17278 / SZ) (Geobacter lovleyi).